The primary structure comprises 404 residues: MAFCSPHTTTSLRSPCTTIPNSGFRQNQVIFFTTRSSRRSNTRHGARTFQVSCAVEQPIVIGLAADSGCGKSTFMRRLTSVFGGAAEPPKGGNPDSNTLISDTTTVICLDDYHSLDRTGRKEKGVTALDPKANDFDLMYEQVKAIKEGKAIEKPIYNHVTGLLDPAELIQPPKIFVIEGLHPMYDERVRELLDFSIYLDISNEVKFAWKIQRDMAERGHSLESIKASIEARKPDFDAFIDPQKQYADAVIEVLPTQLIPDDNEGKVLRVKLIMKEGIKFFNPVYLFDEGSTINWIPCGRKLTCSYPGIKFSYGPDTYFGQEVSVLEMDGQFDRLDELIYVESHLSNLSTKFYGEVTQQMLKHADFPGSNNGTGLFQTIVGLKIRDLYEQIIAERAGVPAEAAKV.

The transit peptide at 1-53 (MAFCSPHTTTSLRSPCTTIPNSGFRQNQVIFFTTRSSRRSNTRHGARTFQVSC) directs the protein to the chloroplast. A disulfide bond links C69 and C108.

This sequence belongs to the phosphoribulokinase family.

The protein resides in the plastid. It is found in the chloroplast. The catalysed reaction is D-ribulose 5-phosphate + ATP = D-ribulose 1,5-bisphosphate + ADP + H(+). Its pathway is carbohydrate biosynthesis; Calvin cycle. Light regulated via thioredoxin by reversible oxidation/reduction of sulfhydryl/disulfide groups. In Triticum aestivum (Wheat), this protein is Phosphoribulokinase, chloroplastic.